A 533-amino-acid chain; its full sequence is Glucans biosynthesis protein D (533 aa).

The tat-type signal signal peptide spans 1-28 (MQRRHFLKNAAAALAALGLPALPPWALA).

Belongs to the OpgD/OpgG family. Post-translationally, predicted to be exported by the Tat system. The position of the signal peptide cleavage has not been experimentally proven.

It localises to the periplasm. It functions in the pathway glycan metabolism; osmoregulated periplasmic glucan (OPG) biosynthesis. Its function is as follows. Probably involved in the control of the structural glucose backbone of osmoregulated periplasmic glucans (OPGs). The protein is Glucans biosynthesis protein D of Xanthomonas campestris pv. campestris (strain 8004).